The sequence spans 672 residues: Outer dynein arm-docking complex subunit 4 (672 aa).

8 TPR repeats span residues 13–46 (FPSY…QDGD), 48–80 (NCLV…DPAF), 81–114 (CKGI…RPDR), 275–311 (LKSL…NKEE), 320–353 (GNLY…AKEY), 360–393 (SRAL…AKTT), 397–430 (TWLF…AEEE), and 437–470 (LNAS…AKLV). Residues 527-544 (RVRDEPEKVVKQWDHSED) show a composition bias toward basic and acidic residues. Positions 527–672 (RVRDEPEKVV…TGNEMEKEYE (146 aa)) are disordered. Residues 545–555 (EKETDEDDEAF) show a composition bias toward acidic residues. Basic and acidic residues-rich tracts occupy residues 595–650 (ETGR…EELG) and 658–672 (GETK…KEYE).

In terms of assembly, component of the outer dynein arm-docking complex along with ODAD1, ODAD2 and ODAD3. Interacts with ODAD1; this interaction may facilitate the recruitment and/or attachment of outer dynein arm docking complex proteins, including ODAD1, ODAD3 and ODAD2, to ciliary axonemes. Interacts with components of the IFT complex A, including IFT140, TTC21B/IFT139 and WDR19/IFT144, and the IFT complex B, including IFT46, IFT52 and IFT57. Interacts with CFAP53. Expressed in the nasal mucosa (at protein level).

It is found in the cytoplasm. Its subcellular location is the cytoskeleton. The protein resides in the cilium axoneme. In terms of biological role, component of the outer dynein arm-docking complex (ODA-DC) that mediates outer dynein arms (ODA) binding onto the doublet microtubule. Plays an essential role for the assembly of ODA-DC and for the docking of ODA in ciliary axoneme. The chain is Outer dynein arm-docking complex subunit 4 from Homo sapiens (Human).